The sequence spans 329 residues: MDAQNKEVDALVQKITGLHAAIAKLPSLSPSPDVDALFTDLVTACVPPSPVDVTKLGSEAQEMREGLIRLCSEAEGKLEAHYSDMLAAFDNPLDHLGMFPYYSNYINLSKLEYELLARYVPGRHRPARVAFIGSGPLPFSSYVLAARHLPDAMFDNYDLCSAANDRASKLFRADKDVGARMSFHTADVADLTGELAAYDVVFLAALVGMAAEDKTKVIAHLGAHMADGAALVVRSAHGHVGFLYPIVDPQDIGRGGFEVLAVCHPDDDVVNSVIIAHKSKDVHANERPNGVVDSTRGAVPVVSPPCRFGEMVADVTHKREEFTNAEVAF.

It belongs to the nicotianamine synthase (NAS)-like family. As to quaternary structure, homotrimer.

The enzyme catalyses 3 S-adenosyl-L-methionine = nicotianamine + 3 S-methyl-5'-thioadenosine + 3 H(+). Functionally, synthesizes nicotianamine, a polyamine that is the first intermediate in the synthesis of the phytosiderophores of the mugineic acid type found in gramineae which serve as a sensor for the physiological iron status within the plant, and/or might be involved in the transport of iron. This is Nicotianamine synthase 8 (NAS8) from Hordeum vulgare (Barley).